The primary structure comprises 513 residues: Light-independent protochlorophyllide reductase subunit B (513 aa).

Aspartate 36 is a [4Fe-4S] cluster binding site. Aspartate 299 serves as the catalytic Proton donor. Position 434 to 435 (glycine 434 to methionine 435) interacts with substrate.

The protein belongs to the ChlB/BchB/BchZ family. As to quaternary structure, protochlorophyllide reductase is composed of three subunits; ChlL, ChlN and ChlB. Forms a heterotetramer of two ChlB and two ChlN subunits. Requires [4Fe-4S] cluster as cofactor.

The protein resides in the plastid. The protein localises to the chloroplast. It catalyses the reaction chlorophyllide a + oxidized 2[4Fe-4S]-[ferredoxin] + 2 ADP + 2 phosphate = protochlorophyllide a + reduced 2[4Fe-4S]-[ferredoxin] + 2 ATP + 2 H2O. It participates in porphyrin-containing compound metabolism; chlorophyll biosynthesis (light-independent). Component of the dark-operative protochlorophyllide reductase (DPOR) that uses Mg-ATP and reduced ferredoxin to reduce ring D of protochlorophyllide (Pchlide) to form chlorophyllide a (Chlide). This reaction is light-independent. The NB-protein (ChlN-ChlB) is the catalytic component of the complex. This is Light-independent protochlorophyllide reductase subunit B from Cycas taitungensis (Prince sago).